A 614-amino-acid chain; its full sequence is Zinc metalloproteinase-disintegrin-like Eoc1 (614 aa).

The first 19 residues, 1–19 (MQVLLITISLAVLPYLGSS), serve as a signal peptide directing secretion. Residues 20–193 (IILESGIVND…KASQLNLTPE (174 aa)) constitute a propeptide that is removed on maturation. Gln-194 carries the post-translational modification Pyrrolidone carboxylic acid. A Peptidase M12B domain is found at 202-398 (KHIKVAIVAD…KMPQCILIKP (197 aa)). N-linked (GlcNAc...) asparagine glycosylation occurs at Asn-268. 3 disulfide bridges follow: Cys-313-Cys-393, Cys-353-Cys-377, and Cys-355-Cys-360. Residue His-338 coordinates Zn(2+). Glu-339 is a catalytic residue. Positions 342 and 348 each coordinate Zn(2+). Asn-376 carries an N-linked (GlcNAc...) asparagine glycan. Positions 406–492 (PPVCGNSLVE…ECPADQFQRN (87 aa)) constitute a Disintegrin domain. Residues Val-408, Asn-411, Leu-413, Glu-415, Glu-418, and Asp-421 each coordinate Ca(2+). 14 disulfide bridges follow: Cys-409–Cys-438, Cys-420–Cys-433, Cys-422–Cys-428, Cys-432–Cys-455, Cys-446–Cys-452, Cys-451–Cys-477, Cys-464–Cys-484, Cys-471–Cys-503, Cys-496–Cys-508, Cys-515–Cys-565, Cys-530–Cys-576, Cys-543–Cys-553, Cys-560–Cys-602, and Cys-596–Cys-607. The short motif at 470–472 (ECD) is the D/ECD-tripeptide element. Asn-498 is a glycosylation site (N-linked (GlcNAc...) asparagine).

It belongs to the venom metalloproteinase (M12B) family. P-III subfamily. P-IIIc sub-subfamily. In terms of assembly, heterodimer; disulfide-linked. The cofactor is Zn(2+). Expressed by the venom gland.

Its subcellular location is the secreted. Functionally, this metalloproteinase hydrolyzes azocasein, and oxidized insulin B-chain. Also hydrolyzes the alpha-chain (FGA) and more slowly the beta-chain of fibrinogen (FGB), without affecting the gamma-chain. Does not cleave fibrin. Inhibits endothelial cell adhesion to extracellular matrix proteins such as fibrinogen, fibronectin, vitronectin, collagen I, and collagen IV. Induces apoptosis in vascular endothelial cells. This is Zinc metalloproteinase-disintegrin-like Eoc1 (Svmp3-Eoc1) from Echis ocellatus (Ocellated saw-scaled viper).